A 440-amino-acid chain; its full sequence is Heat stress transcription factor A-4b (440 aa).

A coiled-coil region spans residues 121 to 181; that stretch reads NERKDYEEEI…QRSLISYVRE (61 aa). The segment at 133 to 183 is hydrophobic repeat HR-A/B; that stretch reads LKSDNAALSSELQNNTLKKLNMEKRMQALEEKLFVVEDQQRSLISYVREIV. A Nuclear export signal motif is present at residues 158 to 163; it reads MQALEE. The Nuclear localization signal signature appears at 200–204; the sequence is RKKRR. The tract at residues 264-417 is disordered; the sequence is DISYDDGVPG…EMKSGDRQHL (154 aa). The span at 295–305 shows a compositional bias: polar residues; that stretch reads SPPTRMRTSSA. Positions 333-343 are enriched in basic and acidic residues; that stretch reads SRVDTRAKVSE. The short motif at 375–384 is the AHA element; the sequence is DGFWQQFLTE. Positions 380-390 are enriched in polar residues; it reads QFLTEQPGSSD. The segment covering 391 to 417 has biased composition (basic and acidic residues); it reads AHQEAQSERRDGGNKVDEMKSGDRQHL.

Belongs to the HSF family. Class A subfamily. As to quaternary structure, homotrimer. Post-translationally, exhibits temperature-dependent phosphorylation.

It localises to the cytoplasm. The protein localises to the nucleus. Its function is as follows. Transcriptional regulator that specifically binds DNA of heat shock promoter elements (HSE). This chain is Heat stress transcription factor A-4b (HSFA4B), found in Oryza sativa subsp. japonica (Rice).